We begin with the raw amino-acid sequence, 72 residues long: Translation initiation factor IF-1 (72 aa).

One can recognise an S1-like domain in the interval 1–72; the sequence is MSKDDVIEMQ…TRGRITWRAK (72 aa).

It belongs to the IF-1 family. In terms of assembly, component of the 30S ribosomal translation pre-initiation complex which assembles on the 30S ribosome in the order IF-2 and IF-3, IF-1 and N-formylmethionyl-tRNA(fMet); mRNA recruitment can occur at any time during PIC assembly.

Its subcellular location is the cytoplasm. In terms of biological role, one of the essential components for the initiation of protein synthesis. Stabilizes the binding of IF-2 and IF-3 on the 30S subunit to which N-formylmethionyl-tRNA(fMet) subsequently binds. Helps modulate mRNA selection, yielding the 30S pre-initiation complex (PIC). Upon addition of the 50S ribosomal subunit IF-1, IF-2 and IF-3 are released leaving the mature 70S translation initiation complex. The polypeptide is Translation initiation factor IF-1 (Clostridium beijerinckii (strain ATCC 51743 / NCIMB 8052) (Clostridium acetobutylicum)).